Here is a 777-residue protein sequence, read N- to C-terminus: Ral guanine nucleotide dissociation stimulator-like 2 (777 aa).

Residues 1-54 (MLPRPLRLLLDTSPPGGVVLSSFRSRDPEEGGGPGGLVVGGGQEEEEEEEEEAP) are disordered. Phosphoserine is present on Ser-13. Positions 31-42 (GGGPGGLVVGGG) are enriched in gly residues. Residues 43 to 54 (QEEEEEEEEEAP) show a composition bias toward acidic residues. In terms of domain architecture, N-terminal Ras-GEF spans 88 to 212 (SSRRLRAGTL…GSADLIRNLR (125 aa)). One can recognise a Ras-GEF domain in the interval 243–513 (LADHLAEQLT…HRVSCEVEPP (271 aa)). Ser-409 is modified (phosphoserine). 2 stretches are compositionally biased toward low complexity: residues 581–610 (SLDS…SPRP) and 618–632 (ASCG…EEAS). Disordered regions lie at residues 581–644 (SLDS…GSGP) and 734–766 (RRSS…PRIK). The segment covering 633–644 (GGTGYGGEGSGP) has biased composition (gly residues). A Ras-associating domain is found at 648–735 (DCRIIRVQME…HDFLLRQRRR (88 aa)). Positions 740 to 755 (TPGVTSGPSASGTPPS) are enriched in low complexity.

In terms of assembly, interacts with SAMD9.

Its function is as follows. Probable guanine nucleotide exchange factor. Putative effector of Ras and/or Rap. Associates with the GTP-bound form of Rap 1A and H-Ras in vitro. In Homo sapiens (Human), this protein is Ral guanine nucleotide dissociation stimulator-like 2 (RGL2).